The sequence spans 761 residues: Translation initiation factor IF-2 (761 aa).

The interval Asp-39–Pro-179 is disordered. A compositionally biased stretch (low complexity) spans Lys-45–Gln-105. Polar residues predominate over residues Thr-106 to Ala-120. The span at Pro-142–Asn-154 shows a compositional bias: low complexity. The segment covering Arg-155–Gln-168 has biased composition (basic residues). Residues Glu-262–Asp-435 enclose the tr-type G domain. Residues Gly-271–Thr-278 form a G1 region. Gly-271 to Thr-278 contributes to the GTP binding site. The interval Gly-296–His-300 is G2. Positions Asp-317–Gly-320 are G3. Residues Asp-317–His-321 and Asn-371–Asp-374 contribute to the GTP site. Residues Asn-371–Asp-374 are G4. Residues Ser-407 to Leu-409 are G5.

The protein belongs to the TRAFAC class translation factor GTPase superfamily. Classic translation factor GTPase family. IF-2 subfamily.

It localises to the cytoplasm. One of the essential components for the initiation of protein synthesis. Protects formylmethionyl-tRNA from spontaneous hydrolysis and promotes its binding to the 30S ribosomal subunits. Also involved in the hydrolysis of GTP during the formation of the 70S ribosomal complex. The polypeptide is Translation initiation factor IF-2 (Shouchella clausii (strain KSM-K16) (Alkalihalobacillus clausii)).